The sequence spans 156 residues: Putative NrdI-like protein (156 aa).

The protein is Putative NrdI-like protein of Streptococcus pneumoniae (strain ATCC BAA-255 / R6).